Consider the following 130-residue polypeptide: Phosphoribosyl-AMP cyclohydrolase (130 aa).

Residue aspartate 77 participates in Mg(2+) binding. Cysteine 78 provides a ligand contact to Zn(2+). Mg(2+) is bound by residues aspartate 79 and aspartate 81. Zn(2+) is bound by residues cysteine 95 and cysteine 102.

Belongs to the PRA-CH family. In terms of assembly, homodimer. Mg(2+) serves as cofactor. The cofactor is Zn(2+).

It localises to the cytoplasm. The catalysed reaction is 1-(5-phospho-beta-D-ribosyl)-5'-AMP + H2O = 1-(5-phospho-beta-D-ribosyl)-5-[(5-phospho-beta-D-ribosylamino)methylideneamino]imidazole-4-carboxamide. It functions in the pathway amino-acid biosynthesis; L-histidine biosynthesis; L-histidine from 5-phospho-alpha-D-ribose 1-diphosphate: step 3/9. In terms of biological role, catalyzes the hydrolysis of the adenine ring of phosphoribosyl-AMP. The chain is Phosphoribosyl-AMP cyclohydrolase from Pseudomonas savastanoi pv. phaseolicola (strain 1448A / Race 6) (Pseudomonas syringae pv. phaseolicola (strain 1448A / Race 6)).